The chain runs to 345 residues: Holliday junction branch migration complex subunit RuvB (345 aa).

Positions 4–185 (TDRLIAPSTQ…FGIVSRLEFY (182 aa)) are large ATPase domain (RuvB-L). ATP contacts are provided by residues Leu-24, Arg-25, Gly-66, Lys-69, Thr-70, Thr-71, 132-134 (EDY), Arg-175, Tyr-185, and Arg-222. A Mg(2+)-binding site is contributed by Thr-70. The segment at 186–256 (TADELARIVH…IADAALKMLD (71 aa)) is small ATPAse domain (RuvB-S). The segment at 259 to 345 (KLGFDVMDRK…KIGTGELWQQ (87 aa)) is head domain (RuvB-H). DNA contacts are provided by Arg-295, Arg-314, and Arg-319.

It belongs to the RuvB family. In terms of assembly, homohexamer. Forms an RuvA(8)-RuvB(12)-Holliday junction (HJ) complex. HJ DNA is sandwiched between 2 RuvA tetramers; dsDNA enters through RuvA and exits via RuvB. An RuvB hexamer assembles on each DNA strand where it exits the tetramer. Each RuvB hexamer is contacted by two RuvA subunits (via domain III) on 2 adjacent RuvB subunits; this complex drives branch migration. In the full resolvosome a probable DNA-RuvA(4)-RuvB(12)-RuvC(2) complex forms which resolves the HJ.

Its subcellular location is the cytoplasm. The enzyme catalyses ATP + H2O = ADP + phosphate + H(+). In terms of biological role, the RuvA-RuvB-RuvC complex processes Holliday junction (HJ) DNA during genetic recombination and DNA repair, while the RuvA-RuvB complex plays an important role in the rescue of blocked DNA replication forks via replication fork reversal (RFR). RuvA specifically binds to HJ cruciform DNA, conferring on it an open structure. The RuvB hexamer acts as an ATP-dependent pump, pulling dsDNA into and through the RuvAB complex. RuvB forms 2 homohexamers on either side of HJ DNA bound by 1 or 2 RuvA tetramers; 4 subunits per hexamer contact DNA at a time. Coordinated motions by a converter formed by DNA-disengaged RuvB subunits stimulates ATP hydrolysis and nucleotide exchange. Immobilization of the converter enables RuvB to convert the ATP-contained energy into a lever motion, pulling 2 nucleotides of DNA out of the RuvA tetramer per ATP hydrolyzed, thus driving DNA branch migration. The RuvB motors rotate together with the DNA substrate, which together with the progressing nucleotide cycle form the mechanistic basis for DNA recombination by continuous HJ branch migration. Branch migration allows RuvC to scan DNA until it finds its consensus sequence, where it cleaves and resolves cruciform DNA. The chain is Holliday junction branch migration complex subunit RuvB from Methylobacillus flagellatus (strain ATCC 51484 / DSM 6875 / VKM B-1610 / KT).